The sequence spans 701 residues: MGSEKDSESPHSSVSGIPNPKCRGPGKKQGRISFHSLFHSKRGPRGSKANVGTPLAQQLHQQQQIQQQQLLQPPTPTNVSSDPSTADPAEPLSTSQASLGGQELLECPLCLVRQPAEQLPELQGCSHRSCLCCLRQYLRIEITESRVQLSCPECAERLAPWQVALILDDPNLMEKYEEFLLRRCLASDPDCRWCPAPDCGFAVIASGCASCPRLVCRREGCGAEFCYHCKQAWHPNQTCDSARQQRALSLRTHSNHSPSYTAEQGHTDDIKPCPRCGAYIIKMNDGSCNHMTCAVCGCEFCWLCMKEISDLHYLSPSGCTFWGKKPWSRKKKILWQLGTLIGAPVGITLIAGIAVPAMVIGIPVYIGRKIHSHYEGKKTSHHRRNLAITGGVALSIITAPVIAAVSVGIGVPIMLAYVYGVVPISLCRGGGCGVSRGKGRGVRIDFDEDDGPITVADAWRALKSPSLGESSLEGAASGLSTTSPSEGLSVAPGGLGDTPHFNTLAGGALGARTGKYSRLEVQGTELGKEVAGRETGSLGAASDCASTRGMAGSITSSYTLPDREGTNLEIQVDIETKPSHLCLTTEEDLAPPTAAMAPGVGEEPQDCSSRRSRTVMDSPLGLSPGMSLREGLRDVTLAQPESIRSDLEMSDTQSDDIAELTSDDCDSPHPKSCHGAPPQATCRALNPTDSLHCPDNVILYV.

The disordered stretch occupies residues 1 to 97 (MGSEKDSESP…PAEPLSTSQA (97 aa)). Residues 1–304 (MGSEKDSESP…VCGCEFCWLC (304 aa)) are required for ubiquitin ligase activity and for protection against staurosporin-induced cell death. Residues 57-72 (QQLHQQQQIQQQQLLQ) show a composition bias toward low complexity. Residues 103 to 323 (ELLECPLCLV…LSPSGCTFWG (221 aa)) form a TRIAD supradomain region. Zn(2+)-binding residues include Cys107, Cys110, Cys130, Cys133, Cys194, Cys199, Cys216, Cys221, Cys226, Cys229, His234, Cys239, Cys273, and Cys276. The segment at 107 to 156 (CPLCLVRQPAEQLPELQGCSHRSCLCCLRQYLRIEITESRVQLSCPECAE) adopts an RING-type 1 zinc-finger fold. The IBR-type zinc finger occupies 174–239 (EKYEEFLLRR…KQAWHPNQTC (66 aa)). The segment at 273 to 304 (CPRCGAYIIKMNDGSCNHMTCAVCGCEFCWLC) adopts an RING-type 2; atypical zinc-finger fold. Cys288 is an active-site residue. Residues Cys293, Cys296, Cys301, Cys304, His312, and Cys319 each contribute to the Zn(2+) site. Helical transmembrane passes span 340 to 360 (LIGAPVGITLIAGIAVPAMVI) and 396 to 416 (IITAPVIAAVSVGIGVPIMLA). Disordered regions lie at residues 472-495 (LEGAASGLSTTSPSEGLSVAPGGL) and 658-677 (AELTSDDCDSPHPKSCHGAP).

This sequence belongs to the RBR family. RNF19 subfamily. Interacts with UBE2L3, UBE2L6 and UCKL1.

The protein resides in the cytoplasmic granule membrane. The protein localises to the endoplasmic reticulum membrane. It carries out the reaction [E2 ubiquitin-conjugating enzyme]-S-ubiquitinyl-L-cysteine + [acceptor protein]-L-lysine = [E2 ubiquitin-conjugating enzyme]-L-cysteine + [acceptor protein]-N(6)-ubiquitinyl-L-lysine.. It participates in protein modification; protein ubiquitination. Functionally, E3 ubiquitin-protein ligase which accepts ubiquitin from E2 ubiquitin-conjugating enzymes UBE2L3 and UBE2L6 in the form of a thioester and then directly transfers the ubiquitin to targeted substrates, such as UCKL1. Involved in the cytolytic activity of natural killer cells and cytotoxic T-cells. Protects against staurosporin-induced cell death. This chain is E3 ubiquitin-protein ligase RNF19B (rnf19b), found in Danio rerio (Zebrafish).